The primary structure comprises 137 residues: Transcription antitermination protein NusB (137 aa).

Belongs to the NusB family.

Functionally, involved in transcription antitermination. Required for transcription of ribosomal RNA (rRNA) genes. Binds specifically to the boxA antiterminator sequence of the ribosomal RNA (rrn) operons. This Proteus mirabilis (strain HI4320) protein is Transcription antitermination protein NusB.